The sequence spans 231 residues: Large ribosomal subunit protein uL1 (231 aa).

This sequence belongs to the universal ribosomal protein uL1 family. In terms of assembly, part of the 50S ribosomal subunit.

Binds directly to 23S rRNA. The L1 stalk is quite mobile in the ribosome, and is involved in E site tRNA release. In terms of biological role, protein L1 is also a translational repressor protein, it controls the translation of the L11 operon by binding to its mRNA. The sequence is that of Large ribosomal subunit protein uL1 from Cellvibrio japonicus (strain Ueda107) (Pseudomonas fluorescens subsp. cellulosa).